Here is a 307-residue protein sequence, read N- to C-terminus: PCP degradation transcriptional activation protein (307 aa).

The HTH lysR-type domain occupies 6-63 (LPLGHLMVFDALYRHGSAGKAAHALSMPQPTLSRWLAQLRTHFDDPLFVRTRSGMEPT). The segment at residues 23–42 (AGKAAHALSMPQPTLSRWLA) is a DNA-binding region (H-T-H motif).

This sequence belongs to the LysR transcriptional regulatory family.

Its function is as follows. Transcriptional activator for the pcpA, pcpB and pcpE genes for pentachlorophenol (PCP) degradation. Essential for PCP degradation. This Sphingobium chlorophenolicum protein is PCP degradation transcriptional activation protein (pcpR).